A 695-amino-acid chain; its full sequence is Follicle-stimulating hormone receptor (695 aa).

Residues 1–17 (MALLLVSLLAFMSLGSG) form the signal peptide. Cystine bridges form between cysteine 18–cysteine 25 and cysteine 23–cysteine 32. An LRRNT domain is found at 18–46 (CHHRLCHCSNRVFLCQESKVTEIPSDLPR). Residues 18–366 (CHHRLCHCSN…EDIMGYNILR (349 aa)) are Extracellular-facing. 9 LRR repeats span residues 49 to 72 (VELR…FGDL), 73 to 97 (EKIE…LPNL), 98 to 118 (HEIR…AFQN), 119 to 143 (LPNL…KIQS), 144 to 169 (LQKV…LGLS), 170 to 192 (SESV…AFNG), 193 to 216 (TQLD…VFQG), 217 to 240 (ASGP…GLEN), and 241 to 259 (LKKL…PSLE). Residues asparagine 191 and asparagine 199 are each glycosylated (N-linked (GlcNAc...) asparagine). 4 disulfide bridges follow: cysteine 275–cysteine 346, cysteine 276–cysteine 292, cysteine 276–cysteine 356, and cysteine 292–cysteine 338. N-linked (GlcNAc...) asparagine glycosylation occurs at asparagine 293. Tyrosine 335 carries the sulfotyrosine modification. The chain crosses the membrane as a helical span at residues 367–387 (VLIWFISILAITGNVAVLVVL). Residues 388-398 (TTSQYKLTVPR) are Cytoplasmic-facing. A helical membrane pass occupies residues 399-421 (FLMCNLAFADLCIGIYLLLIASV). The Extracellular portion of the chain corresponds to 422–443 (DVHTRTLYHNYAIDWQTGAGCA). Cysteine 442 and cysteine 517 are joined by a disulfide. Residues 444–465 (DCWLFTVFASELSVYTLTAITL) traverse the membrane as a helical segment. The Cytoplasmic portion of the chain corresponds to 466–485 (ERWHTITHAMQLDCKVQLRH). Residues 486-508 (AASIMVIGWIFSSAAALFPIFGV) traverse the membrane as a helical segment. Residues 509–528 (SSYMKVSICLPMDIDSPLSQ) lie on the Extracellular side of the membrane. A helical membrane pass occupies residues 529–550 (LYVMFLLVLNVLAFVVICGCYL). Residues 551 to 573 (HIYLTVRNPNIVSSASDTRIAKR) lie on the Cytoplasmic side of the membrane. Residues 574–597 (MATLIFTDFLCMAPISFFAISASL) traverse the membrane as a helical segment. The Extracellular portion of the chain corresponds to 598-608 (KVPLITVSKAK). Residues 609 to 630 (ILLVLFYPINSCANPFLYAIFT) traverse the membrane as a helical segment. Residues 631 to 695 (KNFRRDLFIL…LAPLNHLAQN (65 aa)) lie on the Cytoplasmic side of the membrane. The tract at residues 658-677 (TSSTAHNSHPRNGHSSSVSR) is disordered.

Belongs to the G-protein coupled receptor 1 family. FSH/LSH/TSH subfamily. As to quaternary structure, homotrimer. Functions as a homotrimer binding the FSH hormone heterodimer composed of CGA and FSHB. Interacts with ARRB2. Interacts with APPL2; interaction is independent of follicle stimulating hormone stimulation. N-glycosylated; indirectly required for FSH-binding, possibly via a conformational change that allows high affinity binding of hormone. In terms of processing, sulfated.

Its subcellular location is the cell membrane. In terms of biological role, g protein-coupled receptor for follitropin, the follicle-stimulating hormone. Through cAMP production activates the downstream PI3K-AKT and ERK1/ERK2 signaling pathways. The polypeptide is Follicle-stimulating hormone receptor (FSHR) (Cavia porcellus (Guinea pig)).